Reading from the N-terminus, the 432-residue chain is Tyrosine-protein phosphatase non-receptor type 1 (432 aa).

Met-1 is subject to N-acetylmethionine. Positions 3–277 (MEKEFEEIDK…RFSYLAVIEG (275 aa)) constitute a Tyrosine-protein phosphatase domain. Tyr-20 is modified (phosphotyrosine). Ser-50 carries the phosphoserine; by CLK1, CLK2 and PKB/AKT1 or PKB/AKT2 modification. Tyr-66 carries the phosphotyrosine; by EGFR modification. Residues Asp-181 and 215–221 (CSAGIGR) each bind substrate. Cys-215 serves as the catalytic Phosphocysteine intermediate. Position 215 is a cysteine persulfide (Cys-215). Cys-215 is subject to S-nitrosocysteine; in reversibly inhibited form. 2 positions are modified to phosphoserine; by CLK1 and CLK2: Ser-242 and Ser-243. Gln-262 contacts substrate. Disordered regions lie at residues 297 to 322 (EDLD…PHNG) and 335 to 399 (SEET…EEHK). Phosphoserine occurs at positions 335, 362, and 364. The segment covering 354–364 (SSAMHSVSSMS) has biased composition (low complexity). Thr-367 carries the phosphothreonine modification.

Belongs to the protein-tyrosine phosphatase family. Non-receptor class 1 subfamily. In terms of assembly, interacts with EPHA3 (phosphorylated); dephosphorylates EPHA3 and may regulate its trafficking and function. Interacts with MET. Interacts with NCK1. In terms of processing, ser-50 is the major site of phosphorylation as compared to Ser-242 and Ser-243. Activated by phosphorylation at Ser-50. Post-translationally, S-nitrosylation of Cys-215 inactivates the enzyme activity. Sulfhydration at Cys-215 following endoplasmic reticulum stress inactivates the enzyme activity, promoting EIF2AK3/PERK activity. In terms of tissue distribution, most abundant in testis. Also found in kidney, spleen, muscle, liver, heart and brain.

Its subcellular location is the endoplasmic reticulum membrane. The enzyme catalyses O-phospho-L-tyrosyl-[protein] + H2O = L-tyrosyl-[protein] + phosphate. Tyrosine-protein phosphatase which acts as a regulator of endoplasmic reticulum unfolded protein response. Mediates dephosphorylation of EIF2AK3/PERK; inactivating the protein kinase activity of EIF2AK3/PERK. May play an important role in CKII- and p60c-src-induced signal transduction cascades. May regulate the EFNA5-EPHA3 signaling pathway which modulates cell reorganization and cell-cell repulsion. May also regulate the hepatocyte growth factor receptor signaling pathway through dephosphorylation of MET. The protein is Tyrosine-protein phosphatase non-receptor type 1 (Ptpn1) of Mus musculus (Mouse).